We begin with the raw amino-acid sequence, 294 residues long: 1D-myo-inositol 2-acetamido-2-deoxy-alpha-D-glucopyranoside deacetylase (294 aa).

Residues His-13, Asp-16, and His-148 each contribute to the Zn(2+) site.

This sequence belongs to the MshB deacetylase family. The cofactor is Zn(2+).

It carries out the reaction 1D-myo-inositol 2-acetamido-2-deoxy-alpha-D-glucopyranoside + H2O = 1D-myo-inositol 2-amino-2-deoxy-alpha-D-glucopyranoside + acetate. Catalyzes the deacetylation of 1D-myo-inositol 2-acetamido-2-deoxy-alpha-D-glucopyranoside (GlcNAc-Ins) in the mycothiol biosynthesis pathway. This Geodermatophilus obscurus (strain ATCC 25078 / DSM 43160 / JCM 3152 / CCUG 61914 / KCC A-0152 / KCTC 9177 / NBRC 13315 / NRRL B-3577 / G-20) protein is 1D-myo-inositol 2-acetamido-2-deoxy-alpha-D-glucopyranoside deacetylase.